Reading from the N-terminus, the 414-residue chain is MHTEAVGGAARRPQKLRSQAAAPACRAMPSEFTSAKLRSDCSRTSLQWYTRTQHKMRRPSLLIKDICKCTLVAFGVWLLYILILNYTAEECDMKRMHYVDPDRIKRAQSYAQEVLQKECRPRYAKTAMALLFEDRYSINLEPFVQKVPTASEAELKYDPPFGFRKFSSKVQSLLDMLPEHDFPEHLRAKACKRCVVVGNGGILHGLELGHALNQFDVVIRLNSAPVEGYSEHVGNKTTIRMTYPEGAPLSDVEYYANDLFVTVLFKSVDFKWLQAMVKNESLPFWVRLFFWKQVAEKVPLQPKHFRILNPVIIKETAFDILQYSEPQSRFWGHDKNIPTIGVIAVVLATHLCDEVSLAGFGYDLSQPRTPLHYFDSQCMGAMHWQVMHNVTTETKFLLKLLKEGVVEDLSGGIH.

The Cytoplasmic segment spans residues 1–65; that stretch reads MHTEAVGGAA…MRRPSLLIKD (65 aa). Residues 66 to 86 traverse the membrane as a helical; Signal-anchor for type II membrane protein segment; that stretch reads ICKCTLVAFGVWLLYILILNY. Residues 87-414 lie on the Lumenal side of the membrane; the sequence is TAEECDMKRM…VVEDLSGGIH (328 aa). An intrachain disulfide couples Cys194 to Cys352. Asn235, Asn279, and Asn389 each carry an N-linked (GlcNAc...) asparagine glycan.

It belongs to the glycosyltransferase 29 family. Mainly expressed in brain, and then testis, heart and liver, almost all tissues showed some levels of the gene expression.

Its subcellular location is the golgi apparatus membrane. The catalysed reaction is a beta-D-Gal-(1-&gt;4)-beta-D-Glc-(1&lt;-&gt;1)-Cer(d18:1(4E)) + CMP-N-acetyl-beta-neuraminate = a ganglioside GM3 (d18:1(4E)) + CMP + H(+). The enzyme catalyses ganglioside GA2 (d18:1(4E)/18:0) + CMP-N-acetyl-beta-neuraminate = ganglioside GM2 (d18:1(4E)/18:0) + CMP + H(+). It carries out the reaction a beta-D-Gal-(1&lt;-&gt;1')-ceramide + CMP-N-acetyl-beta-neuraminate = N-acetyl-alpha-neuraminosyl-(2-&gt;3)-beta-D-galactosyl-(1&lt;-&gt;1')-ceramide + CMP + H(+). It catalyses the reaction ganglioside GA1 (d18:1(4E)/18:0) + CMP-N-acetyl-beta-neuraminate = ganglioside GM1 (d18:1(4E)/18:0) + CMP + H(+). (Microbial infection) Gangliosides GD1b and GT1b (derived from GM3) may serve as receptors for some C.botulinum neurotoxins (minimally types BoNT/A, B, C). Functionally, transfers the sialyl group (N-acetyl-alpha-neuraminyl or NeuAc) from CMP-NeuAc to the non-reducing terminal galactose (Gal) of glycosphingolipids forming gangliosides (important molecules involved in the regulation of multiple cellular processes, including cell proliferation and differentiation, apoptosis, embryogenesis, development, and oncogenesis). Mainly involved in the biosynthesis of ganglioside GM3 but can also use different glycolipids as substrate acceptors such as D-galactosylceramide (GalCer), asialo-GM2 (GA2) and asialo-GM1 (GA1), although less preferentially than beta-D-Gal-(1-&gt;4)-beta-D-Glc-(1&lt;-&gt;1)-Cer (LacCer). This chain is Lactosylceramide alpha-2,3-sialyltransferase (St3gal5), found in Mus musculus (Mouse).